We begin with the raw amino-acid sequence, 241 residues long: 4-hydroxy-tetrahydrodipicolinate reductase (241 aa).

Residues 80-82 and 104-107 each bind NAD(+); these read ATT and SANM. Catalysis depends on histidine 136, which acts as the Proton donor/acceptor. A (S)-2,3,4,5-tetrahydrodipicolinate-binding site is contributed by histidine 137. The active-site Proton donor is the lysine 140. 146–147 contributes to the (S)-2,3,4,5-tetrahydrodipicolinate binding site; it reads GT.

This sequence belongs to the DapB family.

The protein localises to the cytoplasm. It catalyses the reaction (S)-2,3,4,5-tetrahydrodipicolinate + NAD(+) + H2O = (2S,4S)-4-hydroxy-2,3,4,5-tetrahydrodipicolinate + NADH + H(+). The enzyme catalyses (S)-2,3,4,5-tetrahydrodipicolinate + NADP(+) + H2O = (2S,4S)-4-hydroxy-2,3,4,5-tetrahydrodipicolinate + NADPH + H(+). It participates in amino-acid biosynthesis; L-lysine biosynthesis via DAP pathway; (S)-tetrahydrodipicolinate from L-aspartate: step 4/4. Functionally, catalyzes the conversion of 4-hydroxy-tetrahydrodipicolinate (HTPA) to tetrahydrodipicolinate. The sequence is that of 4-hydroxy-tetrahydrodipicolinate reductase from Staphylococcus haemolyticus (strain JCSC1435).